The sequence spans 24 residues: Brevinin-1Pc (24 aa).

Residues Cys18 and Cys24 are joined by a disulfide bond.

As to expression, expressed by the skin glands.

The protein localises to the secreted. Its function is as follows. Antibacterial activity against Gram-positive bacterium S.aureus and Gram-negative bacterium E.coli. Has activity against C.albicans. The sequence is that of Brevinin-1Pc from Lithobates pipiens (Northern leopard frog).